The chain runs to 739 residues: Sulfate transporter (739 aa).

The segment at 1-27 (MSSESKEQHNVSPRDSAEGNDSYPSGI) is disordered. Ser12 and Ser16 each carry phosphoserine. 2 consecutive transmembrane segments (helical) span residues 112–132 (VMSG…YSLL) and 137–157 (PVYG…LGTS). 2 N-linked (GlcNAc...) asparagine glycosylation sites follow: Asn199 and Asn205. Helical transmembrane passes span 219-239 (IMVG…MGFF) and 242-262 (GFVS…GASF). Asn357 carries an N-linked (GlcNAc...) asparagine glycan. A run of 4 helical transmembrane segments spans residues 378 to 398 (LIPS…AITV), 420 to 440 (AIGF…SAAL), 455 to 475 (LSGV…APLF), and 524 to 544 (LLST…CVIL). In terms of domain architecture, STAS spans 568–719 (AYKNLQIKPG…YSVYEAMAFA (152 aa)).

It belongs to the SLC26A/SulP transporter (TC 2.A.53) family. N-glycosylated. In terms of tissue distribution, ubiquitously expressed.

The protein resides in the cell membrane. Its subcellular location is the apical cell membrane. The enzyme catalyses oxalate(in) + sulfate(out) = oxalate(out) + sulfate(in). It carries out the reaction sulfate(out) + 2 chloride(in) = sulfate(in) + 2 chloride(out). The catalysed reaction is oxalate(out) + 2 chloride(in) = oxalate(in) + 2 chloride(out). It catalyses the reaction bromide(in) + chloride(out) = bromide(out) + chloride(in). The enzyme catalyses nitrate(in) + chloride(out) = nitrate(out) + chloride(in). It carries out the reaction iodide(in) + chloride(out) = iodide(out) + chloride(in). Its activity is regulated as follows. An extracellular acidic pH inhibits chloride-sulfate and chloride-oxalate exchange activity whereas an intracellular acidic pH activates chloride-sulfate exchange with no effect on chloride-oxalate exchange activity. Sulfate transporter which mediates sulfate uptake into chondrocytes in order to maintain adequate sulfation of proteoglycans which is needed for cartilage development. Mediates electroneutral anion exchange of sulfate ions for oxalate ions and of sulfate and oxalate ions for chloride ions. Mediates exchange of sulfate and oxalate ions for hydroxyl ions and of chloride ions for bromide, iodide and nitrate ions. The coupling of sulfate transport to both hydroxyl and chloride ions likely serves to ensure transport at both acidic pH when most sulfate uptake is mediated by sulfate-hydroxide exchange and alkaline pH when most sulfate uptake is mediated by sulfate-chloride exchange. Essential for chondrocyte proliferation, differentiation and cell size expansion. The sequence is that of Sulfate transporter (SLC26A2) from Homo sapiens (Human).